The primary structure comprises 21 residues: ENFKIKHTEPGLLSMANAGKN.

A disordered region spans residues 1–21 (ENFKIKHTEPGLLSMANAGKN).

Belongs to the cyclophilin-type PPIase family. PPIase A subfamily.

It catalyses the reaction [protein]-peptidylproline (omega=180) = [protein]-peptidylproline (omega=0). Functionally, PPIases accelerate the folding of proteins. It catalyzes the cis-trans isomerization of proline imidic peptide bonds in oligopeptides. The polypeptide is Peptidyl-prolyl cis-trans isomerase (Naegleria fowleri (Brain eating amoeba)).